Here is a 420-residue protein sequence, read N- to C-terminus: Histidine--tRNA ligase (420 aa).

This sequence belongs to the class-II aminoacyl-tRNA synthetase family. As to quaternary structure, homodimer.

It localises to the cytoplasm. It catalyses the reaction tRNA(His) + L-histidine + ATP = L-histidyl-tRNA(His) + AMP + diphosphate + H(+). The polypeptide is Histidine--tRNA ligase (Mycobacterium marinum (strain ATCC BAA-535 / M)).